A 466-amino-acid polypeptide reads, in one-letter code: Ras GTPase-activating protein-binding protein 1 (466 aa).

The NTF2 domain occupies 11-133; that stretch reads VGREFVRQYY…FYVHNDIFRY (123 aa). Residues Lys-36, Lys-50, Lys-59, Lys-64, Lys-76, and Lys-123 each participate in a glycyl lysine isopeptide (Lys-Gly) (interchain with G-Cter in ubiquitin) cross-link. Residues 142 to 225 form an acidic disordered region region; sequence VTEPQEESEE…EPVLEETAPE (84 aa). Thr-143 is subject to Phosphothreonine. Disordered stretches follow at residues 144–172 and 184–243; these read EPQE…DSGT and EEHL…QTVQ. Composition is skewed to acidic residues over residues 145–157 and 185–206; these read PQEE…EEPE and EHLE…EQEP. Ser-149 carries the phosphoserine modification. Phosphoserine occurs at positions 231, 232, 250, and 253. Residues 255–329 form a disordered region; that stretch reads TSKNLPPSGA…REAGEQGDIE (75 aa). Basic and acidic residues-rich tracts occupy residues 297-307 and 318-329; these read PQRDQRVREQR and PIREAGEQGDIE. The region spanning 340-415 is the RRM domain; the sequence is HQLFIGNLPH…VRLNVEEKKT (76 aa). Residues Lys-353 and Lys-357 each participate in a glycyl lysine isopeptide (Lys-Gly) (interchain with G-Cter in ubiquitin) cross-link. Residue Ser-373 is modified to Phosphoserine. Lys-376 is covalently cross-linked (Glycyl lysine isopeptide (Lys-Gly) (interchain with G-Cter in ubiquitin)). N6-acetyllysine; alternate is present on Lys-376. A Glycyl lysine isopeptide (Lys-Gly) (interchain with G-Cter in SUMO2); alternate cross-link involves residue Lys-376. A Glycyl lysine isopeptide (Lys-Gly) (interchain with G-Cter in ubiquitin); alternate cross-link involves residue Lys-393. An RG-rich region region spans residues 410-466; the sequence is VEEKKTRAAREGDRRDNRLRGPGGPRGGLGGGMRGPPRGGMVQKPGFGVGRGLAPRQ. Basic and acidic residues predominate over residues 413 to 428; sequence KKTRAAREGDRRDNRL. Residues 413–466 are disordered; the sequence is KKTRAAREGDRRDNRLRGPGGPRGGLGGGMRGPPRGGMVQKPGFGVGRGLAPRQ. Arg-429 is modified (asymmetric dimethylarginine). Residues 430–447 show a composition bias toward gly residues; it reads GPGGPRGGLGGGMRGPPR. Arg-435 bears the Asymmetric dimethylarginine; alternate mark. Residue Arg-435 is modified to Dimethylated arginine; alternate. Omega-N-methylarginine; alternate is present on Arg-435. An Omega-N-methylarginine modification is found at Arg-447. The residue at position 460 (Arg-460) is a Dimethylated arginine; alternate. Arg-460 carries the omega-N-methylarginine; alternate modification. Arg-465 is modified (omega-N-methylarginine).

As to quaternary structure, homodimer and oligomer. Component of a TAU mRNP complex, at least composed of IGF2BP1, ELAVL4 and G3BP1. Binds to the SH3 domain of Ras GTPase-activating protein (RASA1) in proliferating cells. No interaction in quiescent cells. Interacts (via NTF2 domain) with USP10; inhibiting stress granule formation by lowering G3BP1 valence. Interacts (via NTF2 domain) with CAPRIN1; promoting stress granule formation by lowering the saturation-concentration of G3BP1. Interacts (via NTF2 domain) with UBAP2L; promoting stress granule formation. Associates (via RG-rich region) with 40S ribosome subunits. Interacts with RPTOR and SPAG5; this complex is increased by oxidative stress. Interacts with ATXN2L. Interacts with STYXL1. Interacts with CGAS (via N-terminus); this interaction promotes the DNA-binding and activation of CGAS. Interacts (via C-terminus) with RIGI. Interacts with PABPC1. Interacts with QKI (isoforms QKI6 and QKI7); directing N(7)-methylguanine-containing mRNAs to stress granules. In terms of assembly, (Microbial infection) Interacts with Semliki forest virus non-structural protein 3 (via C-terminus); this interaction inhibits the formation of stress granules on viral mRNAs and the nsp3-G3BP1 complexes bind viral RNAs and probably orchestrate the assembly of viral replication complexes. (Microbial infection) Interacts with Chikungunya virus non-structural protein 3 (via C-terminus); this interaction inhibits the formation of stress granules on viral mRNAs and the nsp3-G3BP1 complexes bind viral RNAs and probably orchestrate the assembly of viral replication complexes. As to quaternary structure, (Microbial infection) Interacts with Sindbis virus non-structural protein 3 (via C-terminus); this interaction inhibits the formation of stress granules on viral mRNAs and the nsp3-G3BP1 complexes bind viral RNAs and probably orchestrate the assembly of viral replication complexes. In terms of assembly, (Microbial infection) Interacts with Zika virus capsid protein C; this interaction is probably linked to the inhibition of stress granules formation by the virus. (Microbial infection) Interacts with reovirus type 2 protein sigma-NS; this interaction induces the relocalization of G3BP1 to the outer periphery of sigma-NS/mu-Ns viral factories and is probably involved in the suppression of the integrated stress response by the virus. As to quaternary structure, (Microbial infection) Interacts with SARS-CoV-2 N protein; the interaction is enhanced by host HDAC6 which deacetylates the viral N protein and promotes N protein association with G3BP1, disrupting stress granule formation and facilitating viral replication. Interacts with HDAC6; the interaction increases during SARS-CoV-2 infection. It depends on Mg(2+) as a cofactor. In terms of processing, phosphorylation of the acidic disordered region regulates stress granule assembly. RASA1-dependent phosphorylation of Ser-149 induces a conformational change that prevents self-association. Dephosphorylation after HRAS activation is required for stress granule assembly. Ser-149 phosphorylation induces partial nuclear localization. Post-translationally, ubiquitinated by TRIM21 via 'Lys-63'-linked polyubiquitination in the NTF2 domain in response to heat shock, leading to stress granule disassembly: ubiquitination promotes interaction with the FAF2 adapter, followed by interaction with VCP, which extracts G3BP1 from stress granules, leading to stress granule disassembly. In case of prolonged stress, ubiquitination by TRIM21 leads to autophagy-dependent degradation of G3BP1 via recruitment of ubiquitinated G3BP1 by SQSTM1 and/or CALCOCO2 to autophagosomes. (Microbial infection) Cleaved by human enterovirus 71; this cleavage induces the disassembly of cytoplasmic stress granules. Cleaved by Foot-and-mouth disease virus; this cleavage suppresses the formation of cytoplasmic stress granules. In terms of processing, arg-435 is dimethylated, probably to asymmetric dimethylarginine. Post-translationally, (Microbial infection) Cleaved by Encephalomyocarditis virus protease 3C; this cleavage suppresses the formation of cytoplasmic stress granules. Ubiquitous.

It localises to the cytoplasm. Its subcellular location is the cytosol. The protein resides in the perikaryon. The protein localises to the stress granule. It is found in the nucleus. The catalysed reaction is ATP + H2O = ADP + phosphate + H(+). With respect to regulation, under physiological conditions, G3BP1 adopts a compact state that is stabilized by intramolecular interactions between the RG-rich and the acidic regions that inhibit phase separation. Upon stress, polysomes disassemble and mRNAs are released in an unfolded protein-free state. Binding of unfolded mRNA to G3BP1 outcompetes the intramolecular interactions and RNA-bound G3BP1 adopts an expanded conformation in which the RG-rich region becomes exposed to engage in protein-protein and protein-RNA interactions, allowing physical cross-linking of RNA molecules to form protein-RNA condensates, leading to liquid-liquid phase separation (LLPS). Its function is as follows. Protein involved in various processes, such as stress granule formation and innate immunity. Plays an essential role in stress granule formation. Stress granules are membraneless compartments that store mRNAs and proteins, such as stalled translation pre-initiation complexes, in response to stress. Promotes formation of stress granules phase-separated membraneless compartment by undergoing liquid-liquid phase separation (LLPS) upon unfolded RNA-binding: functions as a molecular switch that triggers RNA-dependent LLPS in response to a rise in intracellular free RNA concentrations. Also acts as an ATP- and magnesium-dependent helicase: unwinds DNA/DNA, RNA/DNA, and RNA/RNA substrates with comparable efficiency. Acts unidirectionally by moving in the 5' to 3' direction along the bound single-stranded DNA. Unwinds preferentially partial DNA and RNA duplexes having a 17 bp annealed portion and either a hanging 3' tail or hanging tails at both 5'- and 3'-ends. Plays an essential role in innate immunity by promoting CGAS and RIGI activity. Participates in the DNA-triggered cGAS/STING pathway by promoting the DNA binding and activation of CGAS. Triggers the condensation of cGAS, a process probably linked to the formation of membrane-less organelles. Also enhances RIGI-induced type I interferon production probably by helping RIGI at sensing pathogenic RNA. May also act as a phosphorylation-dependent sequence-specific endoribonuclease in vitro: Cleaves exclusively between cytosine and adenine and cleaves MYC mRNA preferentially at the 3'-UTR. This Homo sapiens (Human) protein is Ras GTPase-activating protein-binding protein 1.